Here is a 255-residue protein sequence, read N- to C-terminus: MWQGCAVERPVGRMTSQTPLPQSPRPRRPTMSTVVELNVGGEFHTTTLGTLRKFPGSKLAEMFSSLAKASTDAEGRFFIDRPSTYFRPILDYLRTGQVPTQHIPEVYREAQFYEIKPLVKLLEDMPQIFGEQVSRKQFLLQVPGYSENLELMVRLARAEAITARKSSVLVCLVETEEQDAYYSEVLCFLQDKKMFKSVVKFGPWKAVLDNSDLMHCLEMDIKAQGYKVFSKFYLTYPTKRNEFHFNIYSFTFTWW.

Residues 1-29 (MWQGCAVERPVGRMTSQTPLPQSPRPRRP) are disordered. The region spanning 33–130 (TVVELNVGGE…LLEDMPQIFG (98 aa)) is the BTB domain.

This is BTB/POZ domain-containing protein KCTD14 (KCTD14) from Homo sapiens (Human).